A 212-amino-acid polypeptide reads, in one-letter code: Large ribosomal subunit protein uL3 (212 aa).

The interval 136 to 155 (THGNSVSHRVLGSTGQNQTP) is disordered. Position 153 is an N5-methylglutamine (Q153).

It belongs to the universal ribosomal protein uL3 family. In terms of assembly, part of the 50S ribosomal subunit. Forms a cluster with proteins L14 and L19. Methylated by PrmB.

In terms of biological role, one of the primary rRNA binding proteins, it binds directly near the 3'-end of the 23S rRNA, where it nucleates assembly of the 50S subunit. The protein is Large ribosomal subunit protein uL3 of Acinetobacter baumannii (strain AB307-0294).